Reading from the N-terminus, the 157-residue chain is Transcriptional regulator AzlB (157 aa).

In terms of domain architecture, HTH asnC-type spans Leu-5 to Glu-66. The H-T-H motif DNA-binding region spans Asn-24–Lys-43.

Functionally, transcriptional repressor of the azlBCD operon involved in branched-chain amino acid transport. The sequence is that of Transcriptional regulator AzlB (azlB) from Bacillus subtilis (strain 168).